An 849-amino-acid polypeptide reads, in one-letter code: Neprilysin-1 (849 aa).

Residues 1–113 (MSQQHEATAA…LKESQQRRRL (113 aa)) lie on the Cytoplasmic side of the membrane. Residues 41 to 61 (QQQVQHQAPHQMQQQQQQQQQ) are compositionally biased toward low complexity. The disordered stretch occupies residues 41–63 (QQQVQHQAPHQMQQQQQQQQQNK). Residues 114 to 134 (LVLAIAFTVLGAAIGALAIYF) form a helical; Signal-anchor for type II membrane protein membrane-spanning segment. At 135–849 (ASVHQRCHLY…MNPAEKCSVW (715 aa)) the chain is on the extracellular side. A compositionally biased stretch (basic and acidic residues) spans 146 to 155 (LEPDNDDRPN). Residues 146-167 (LEPDNDDRPNGRWNQDSGSAHE) form a disordered region. A Peptidase M13 domain is found at 172–849 (ICMTQECVRT…MNPAEKCSVW (678 aa)). Cystine bridges form between C173–C178, C196–C834, C204–C794, C260–C512, and C721–C846. Residues N309, N326, N393, N589, and N599 are each glycosylated (N-linked (GlcNAc...) asparagine). H684 lines the Zn(2+) pocket. Residue E685 is part of the active site. H688 contributes to the Zn(2+) binding site. A glycan (N-linked (GlcNAc...) asparagine) is linked at N709. Residue E746 participates in Zn(2+) binding. Residue D750 is the Proton donor of the active site. N-linked (GlcNAc...) asparagine glycosylation is present at N778.

This sequence belongs to the peptidase M13 family. Requires Zn(2+) as cofactor. In terms of tissue distribution, expressed in the testicular tube, near and in the seminal vesicles. In adults and third-instar larvae, expressed in the midgut and in the mushroom bodies of the brain and neurons in the pars intercerebralis. Also expressed in neurons of the ventral ganglion and imaginal disks (wing and leg) of third-instar larvae. In stage 17 embryos, expressed in the peripheral nervous system, pharynx and midgut.

It localises to the cell membrane. The enzyme catalyses Preferential cleavage of polypeptides between hydrophobic residues, particularly with Phe or Tyr at P1'.. Metalloendoprotease which functions in fertility and memory formation. Required in the dorsal paired medial neurons and alpha/beta mushroom body neurons for the proper formation of long-term and middle-term memories. Required in males to maximise egg-laying in female mates and is also required in females for their fertility. The protein is Neprilysin-1 of Drosophila melanogaster (Fruit fly).